The chain runs to 218 residues: MRLILLGAPGAGKGTQAAFICQKYGIPQISTGDMLRAAVKAGTPLGQQAKAVMDAGKLVSDDLIINLVKDRIAQPDCAKGFLFDGFPRTIPQADAMKAAGVKLDYVLEIDVPFDAIIERMSGRRSHPASGRTYHVKFNPPKVEGKDDVTGEDLIQREDDKEDTVKKRLEVYSAQTRPLVEYYSTWAKNDPANAPKYRAISGTGTVEEITRRALAALAD.

ATP is bound at residue 10–15 (GAGKGT). The tract at residues 30–59 (STGDMLRAAVKAGTPLGQQAKAVMDAGKLV) is NMP. Residues T31, R36, 57–59 (KLV), 85–88 (GFPR), and Q92 contribute to the AMP site. The tract at residues 122 to 159 (GRRSHPASGRTYHVKFNPPKVEGKDDVTGEDLIQREDD) is LID. Residues R123 and 132–133 (TY) contribute to the ATP site. Positions 127 to 147 (PASGRTYHVKFNPPKVEGKDD) are disordered. Positions 156 and 167 each coordinate AMP. G203 lines the ATP pocket.

The protein belongs to the adenylate kinase family. Monomer.

It is found in the cytoplasm. The catalysed reaction is AMP + ATP = 2 ADP. The protein operates within purine metabolism; AMP biosynthesis via salvage pathway; AMP from ADP: step 1/1. In terms of biological role, catalyzes the reversible transfer of the terminal phosphate group between ATP and AMP. Plays an important role in cellular energy homeostasis and in adenine nucleotide metabolism. This chain is Adenylate kinase, found in Paracidovorax citrulli (strain AAC00-1) (Acidovorax citrulli).